Here is a 202-residue protein sequence, read N- to C-terminus: MKVLTARQQQVYDLIRDHIAHSGMPPTRAEIAQQLGFRSPNAAEEHLKALARKGVIEIVSGASRGIRLLMEEETGIPLVGRVAAGEPLLAQEHIECRYQVDPAMFKPSADFLLRVSGMSMKNIGIMDGDLLAVHKTEDVRNGQIVVARIDDEVTVKRLKKQGNTVHLLAENEEFAPIVVDLRQQSFSIEGLAVGVIRNSDWS.

Residues 28–48 (RAEIAQQLGFRSPNAAEEHLK) constitute a DNA-binding region (H-T-H motif). Active-site for autocatalytic cleavage activity residues include Ser119 and Lys156.

The protein belongs to the peptidase S24 family. As to quaternary structure, homodimer.

The enzyme catalyses Hydrolysis of Ala-|-Gly bond in repressor LexA.. Represses a number of genes involved in the response to DNA damage (SOS response), including recA and lexA. In the presence of single-stranded DNA, RecA interacts with LexA causing an autocatalytic cleavage which disrupts the DNA-binding part of LexA, leading to derepression of the SOS regulon and eventually DNA repair. This is LexA repressor from Pectobacterium atrosepticum (strain SCRI 1043 / ATCC BAA-672) (Erwinia carotovora subsp. atroseptica).